A 947-amino-acid chain; its full sequence is Bifunctional glutamine synthetase adenylyltransferase/adenylyl-removing enzyme (947 aa).

Residues Met1–Glu443 form an adenylyl removase region. The tract at residues Ala451–Ala947 is adenylyl transferase.

This sequence belongs to the GlnE family. Mg(2+) is required as a cofactor.

The enzyme catalyses [glutamine synthetase]-O(4)-(5'-adenylyl)-L-tyrosine + phosphate = [glutamine synthetase]-L-tyrosine + ADP. It catalyses the reaction [glutamine synthetase]-L-tyrosine + ATP = [glutamine synthetase]-O(4)-(5'-adenylyl)-L-tyrosine + diphosphate. Involved in the regulation of glutamine synthetase GlnA, a key enzyme in the process to assimilate ammonia. When cellular nitrogen levels are high, the C-terminal adenylyl transferase (AT) inactivates GlnA by covalent transfer of an adenylyl group from ATP to specific tyrosine residue of GlnA, thus reducing its activity. Conversely, when nitrogen levels are low, the N-terminal adenylyl removase (AR) activates GlnA by removing the adenylyl group by phosphorolysis, increasing its activity. The regulatory region of GlnE binds the signal transduction protein PII (GlnB) which indicates the nitrogen status of the cell. This Vibrio parahaemolyticus serotype O3:K6 (strain RIMD 2210633) protein is Bifunctional glutamine synthetase adenylyltransferase/adenylyl-removing enzyme.